A 430-amino-acid chain; its full sequence is 5-methylthioadenosine/S-adenosylhomocysteine deaminase (430 aa).

Zn(2+) contacts are provided by His-59 and His-61. Substrate contacts are provided by Glu-88 and His-181. His-208 serves as a coordination point for Zn(2+). Substrate contacts are provided by Glu-211 and Asp-296. Zn(2+) is bound at residue Asp-296.

This sequence belongs to the metallo-dependent hydrolases superfamily. MTA/SAH deaminase family. Requires Zn(2+) as cofactor.

The catalysed reaction is S-adenosyl-L-homocysteine + H2O + H(+) = S-inosyl-L-homocysteine + NH4(+). It carries out the reaction S-methyl-5'-thioadenosine + H2O + H(+) = S-methyl-5'-thioinosine + NH4(+). Its function is as follows. Catalyzes the deamination of 5-methylthioadenosine and S-adenosyl-L-homocysteine into 5-methylthioinosine and S-inosyl-L-homocysteine, respectively. Is also able to deaminate adenosine. The polypeptide is 5-methylthioadenosine/S-adenosylhomocysteine deaminase (Aquifex aeolicus (strain VF5)).